The chain runs to 502 residues: Xyloglucan-specific endo-beta-1,4-glucanase BoGH5A (502 aa).

Residues 1–32 (MEKQSFSDGLFSPLGIKRVIFMLVLLTTSFIS) form the signal peptide. The N-palmitoyl cysteine moiety is linked to residue C33. Residue C33 is the site of S-diacylglycerol cysteine attachment. The 61-residue stretch at 67-127 (GPAEWHISTS…PDIIINVKQS (61 aa)) folds into the BACON domain. Substrate contacts are provided by N165, V172, H251, and N296. The Proton donor role is filled by E297. E430 (nucleophile) is an active-site residue. W472 is a binding site for substrate.

This sequence belongs to the glycosyl hydrolase 5 (cellulase A) family.

Its subcellular location is the cell outer membrane. The enzyme catalyses xyloglucan + H2O = xyloglucan oligosaccharides.. It functions in the pathway glucan metabolism; xyloglucan degradation. Its function is as follows. Catalyzes endohydrolysis of 1,4-beta-D-glucosidic linkages in xyloglucan with retention of the beta-configuration of the glycosyl residues in xyloglucan degradation. Cleaves the backbone of the 3 major types of natural xyloglucans (seed galactoxyloglucan from tamarind kernel, dicot fucogalactoxyloglucan from lettuce leaves, and solanaceous arabinogalactoxyloglucan from tomato fruit), to produce xyloglucan oligosaccharides. The polypeptide is Xyloglucan-specific endo-beta-1,4-glucanase BoGH5A (Bacteroides ovatus (strain ATCC 8483 / DSM 1896 / JCM 5824 / BCRC 10623 / CCUG 4943 / NCTC 11153)).